The chain runs to 443 residues: Flavastacin (443 aa).

Positions 1-15 are cleaved as a signal peptide; the sequence is MTRKLLILSGCLILA. The propeptide at 16 to 91 is activation peptide; that stretch reads LNSCKSDMET…ANPDISTVER (76 aa). A Peptidase M12A domain is found at 92 to 289; that stretch reads STIVSSFIKT…AGINHLYGPV (198 aa). His-189 is a binding site for Zn(2+). The active site involves Glu-190. 2 residues coordinate Zn(2+): His-193 and His-199. The Ricin B-type lectin domain occupies 297-440; it reads GTYTLTTSLA…PYTKQRFTLT (144 aa). O-linked (Man...) serine glycosylation occurs at Ser-355.

The cofactor is Zn(2+). O-linked glycan consists of the Man, GlcNAc, GlcU, Glc, GlcU, Rha, Man heptasaccharide.

The enzyme catalyses Hydrolyzes polypeptides on the amino-side of Asp in -Xaa-|-Asp-. Acts very slowly on -Xaa-|-Glu.. Its function is as follows. Zinc metallendopeptidase that cleaves preferentially on N-terminal side of aspartate-containing substrates. The sequence is that of Flavastacin from Elizabethkingia meningoseptica (Chryseobacterium meningosepticum).